The chain runs to 147 residues: Hemoglobin subunit beta-1 (147 aa).

The residue at position 2 (Val-2) is an N-acetylvaline. One can recognise a Globin domain in the interval 3-147; it reads HLTGEEKAAV…VATALAHKYH (145 aa). Lys-18 carries the N6-succinyllysine modification. The residue at position 45 (Ser-45) is a Phosphoserine. The residue at position 60 (Lys-60) is an N6-succinyllysine. Positions 64 and 93 each coordinate heme b. At Arg-105 the chain carries Asymmetric dimethylarginine. A Phosphothreonine modification is found at Thr-124.

The protein belongs to the globin family. In terms of assembly, hb1 is a heterotetramer of two alpha chains and two beta-1 chains. As to expression, red blood cells.

Its function is as follows. Involved in oxygen transport from the lung to the various peripheral tissues. This is Hemoglobin subunit beta-1 (HBB1) from Chalinolobus morio (Chocolate-wattled bat).